The sequence spans 448 residues: Inositol hexakisphosphate kinase 2 (448 aa).

ATP-binding positions include 229-231 (ENL) and aspartate 242. Residues 238 to 246 (PCVLDLKMG), lysine 244, and 258 to 265 (KAANQIRK) contribute to the substrate site. Position 405 (aspartate 405) interacts with ATP. A substrate-binding site is contributed by histidine 408.

The protein belongs to the inositol phosphokinase (IPK) family. Highly expressed in brain and lung, and at slightly lower levels in liver, kidney and testis.

Its subcellular location is the nucleus. It carries out the reaction 1D-myo-inositol hexakisphosphate + ATP = 5-diphospho-1D-myo-inositol 1,2,3,4,6-pentakisphosphate + ADP. It participates in phospholipid metabolism; phosphatidylinositol metabolism. Its function is as follows. Converts inositol hexakisphosphate (InsP6) to diphosphoinositol pentakisphosphate (InsP7/PP-InsP5). May play a role in the regulation of Na(+)-dependent phosphate cotransport, possibly via its role in diphosphoinositol pentakisphosphate (InsP7/PP-InsP5) biosynthesis. The polypeptide is Inositol hexakisphosphate kinase 2 (Ip6k2) (Mus musculus (Mouse)).